The primary structure comprises 396 residues: MSDYHHGVQVLEINEGTRVISTVSTAIVGMVCTASDADAETFPLNKPVLITNVQSAISKAGKKGTLAASLQAIADQSKPVTVVMRVEDGTGDDEETKLAQTVSNIIGTTDENGQYTGLKAMLAAESVTGVKPRILGVPGLDTKEVAVALASVCQKLRAFGYISAWGCKTISEVKAYRQNFSQRELMVIWPDFLAWDTVTSTTATAYATARALGLRAKIDQEQGWHKTLSNVGVNGVTGISASVFWDLQESGTDADLLNESGVTTLIRRDGFRFWGNRTCSDDPLFLFENYTRTAQVVADTMAEAHMWAVDKPITATLIRDIVDGINAKFRELKTNGYIVDATCWFSEESNDAETLKAGKLYIDYDYTPVPPLENLTLRQRITDKYLANLVTSVNSN.

Belongs to the myoviridae tail sheath protein family. Homomultimer.

It is found in the virion. The protein resides in the host cytoplasm. Polymerizes as an extended helical structure around the baseplate-tail tube complex. During ejection, the sheath shifts to a contracted form, thereby making the inner tail tube protrude through the host cell envelope. The protein is Tail sheath protein (FI) of Enterobacteriaceae (Bacteriophage P2).